We begin with the raw amino-acid sequence, 121 residues long: uncharacterized protein (121 aa).

Residues 100 to 121 (KSFSNTKDGKKNDDDNNSSSKS) are disordered.

This is an uncharacterized protein from Mycoplasma pneumoniae (strain ATCC 29342 / M129 / Subtype 1) (Mycoplasmoides pneumoniae).